Reading from the N-terminus, the 200-residue chain is Recombination protein RecR (200 aa).

A C4-type zinc finger spans residues 58–75; the sequence is CSTCFCLKNLPESNCEFC. The Toprim domain occupies 82-177; the sequence is STLCIVATPK…SISRLALGLP (96 aa).

This sequence belongs to the RecR family.

In terms of biological role, may play a role in DNA repair. It seems to be involved in an RecBC-independent recombinational process of DNA repair. It may act with RecF and RecO. This is Recombination protein RecR from Chlamydia caviae (strain ATCC VR-813 / DSM 19441 / 03DC25 / GPIC) (Chlamydophila caviae).